A 535-amino-acid polypeptide reads, in one-letter code: Bifunctional purine biosynthesis protein PurH (535 aa).

The region spanning 1-148 is the MGS-like domain; that stretch reads MNNARPIRRA…KNHKDTTIIV (148 aa).

It belongs to the PurH family.

It catalyses the reaction (6R)-10-formyltetrahydrofolate + 5-amino-1-(5-phospho-beta-D-ribosyl)imidazole-4-carboxamide = 5-formamido-1-(5-phospho-D-ribosyl)imidazole-4-carboxamide + (6S)-5,6,7,8-tetrahydrofolate. The catalysed reaction is IMP + H2O = 5-formamido-1-(5-phospho-D-ribosyl)imidazole-4-carboxamide. It functions in the pathway purine metabolism; IMP biosynthesis via de novo pathway; 5-formamido-1-(5-phospho-D-ribosyl)imidazole-4-carboxamide from 5-amino-1-(5-phospho-D-ribosyl)imidazole-4-carboxamide (10-formyl THF route): step 1/1. The protein operates within purine metabolism; IMP biosynthesis via de novo pathway; IMP from 5-formamido-1-(5-phospho-D-ribosyl)imidazole-4-carboxamide: step 1/1. In Shewanella woodyi (strain ATCC 51908 / MS32), this protein is Bifunctional purine biosynthesis protein PurH.